The primary structure comprises 152 residues: Xanthine-guanine phosphoribosyltransferase (152 aa).

5-phospho-alpha-D-ribose 1-diphosphate contacts are provided by residues 37–38, Arg69, and 88–96; these read RG and DDLVDTGGT. A GMP-binding site is contributed by Arg69. Asp89 is a Mg(2+) binding site. Residues Asp92 and Ile135 each contribute to the guanine site. Positions 92 and 135 each coordinate xanthine. Residues 92 to 96 and 134 to 135 each bind GMP; these read DTGGT and WI.

Belongs to the purine/pyrimidine phosphoribosyltransferase family. XGPT subfamily. As to quaternary structure, homotetramer. Requires Mg(2+) as cofactor.

It localises to the cell inner membrane. It catalyses the reaction GMP + diphosphate = guanine + 5-phospho-alpha-D-ribose 1-diphosphate. It carries out the reaction XMP + diphosphate = xanthine + 5-phospho-alpha-D-ribose 1-diphosphate. The enzyme catalyses IMP + diphosphate = hypoxanthine + 5-phospho-alpha-D-ribose 1-diphosphate. It participates in purine metabolism; GMP biosynthesis via salvage pathway; GMP from guanine: step 1/1. Its pathway is purine metabolism; XMP biosynthesis via salvage pathway; XMP from xanthine: step 1/1. Purine salvage pathway enzyme that catalyzes the transfer of the ribosyl-5-phosphate group from 5-phospho-alpha-D-ribose 1-diphosphate (PRPP) to the N9 position of the 6-oxopurines guanine and xanthine to form the corresponding ribonucleotides GMP (guanosine 5'-monophosphate) and XMP (xanthosine 5'-monophosphate), with the release of PPi. To a lesser extent, also acts on hypoxanthine. The polypeptide is Xanthine-guanine phosphoribosyltransferase (Shigella boydii serotype 4 (strain Sb227)).